A 586-amino-acid polypeptide reads, in one-letter code: A-type ATP synthase subunit A (586 aa).

An ATP-binding site is contributed by 232 to 239; sequence GPFGSGKT.

This sequence belongs to the ATPase alpha/beta chains family. Has multiple subunits with at least A(3), B(3), C, D, E, F, H, I and proteolipid K(x).

The protein localises to the cell membrane. The enzyme catalyses ATP + H2O + 4 H(+)(in) = ADP + phosphate + 5 H(+)(out). Functionally, component of the A-type ATP synthase that produces ATP from ADP in the presence of a proton gradient across the membrane. The A chain is the catalytic subunit. The protein is A-type ATP synthase subunit A of Methanococcus maripaludis (strain C5 / ATCC BAA-1333).